The primary structure comprises 80 residues: Small ribosomal subunit protein bS18 (80 aa).

This sequence belongs to the bacterial ribosomal protein bS18 family. Part of the 30S ribosomal subunit. Forms a tight heterodimer with protein bS6.

Binds as a heterodimer with protein bS6 to the central domain of the 16S rRNA, where it helps stabilize the platform of the 30S subunit. The chain is Small ribosomal subunit protein bS18 from Staphylococcus haemolyticus (strain JCSC1435).